The primary structure comprises 153 residues: MDTGAKLKKGAGERKGGGPKKKPVSRSVKAGLQFPVGRIGRFLKKGRYAQRVGSGAPVYLAAVLEYLAAEVLELAGNAARDNKKNRIIPRHVLLAVRNDEELGKLLAGVTIAHGGVLPNINPVLLPKKAEKAAAAATKEPKSPAKATKSPKKA.

2 disordered regions span residues 1 to 27 (MDTGAKLKKGAGERKGGGPKKKPVSRS) and 131 to 153 (KAAAAATKEPKSPAKATKSPKKA). Residues 132–147 (AAAAATKEPKSPAKAT) show a composition bias toward low complexity. The short motif at 149-152 (SPKK) is the SPKK motif element.

It belongs to the histone H2A family. The nucleosome is a histone octamer containing two molecules each of H2A, H2B, H3 and H4 assembled in one H3-H4 heterotetramer and two H2A-H2B heterodimers. The octamer wraps approximately 147 bp of DNA.

It localises to the nucleus. Its subcellular location is the chromosome. In terms of biological role, core component of nucleosome. Nucleosomes wrap and compact DNA into chromatin, limiting DNA accessibility to the cellular machineries which require DNA as a template. Histones thereby play a central role in transcription regulation, DNA repair, DNA replication and chromosomal stability. DNA accessibility is regulated via a complex set of post-translational modifications of histones, also called histone code, and nucleosome remodeling. This Euphorbia esula (Leafy spurge) protein is Histone H2A.